Here is a 464-residue protein sequence, read N- to C-terminus: Probable glycosyltransferase Saci_1499 (464 aa).

The next 6 helical transmembrane spans lie at 6–26 (IFLN…QIIL), 300–320 (LIIY…STLL), 337–357 (ALLF…SLAL), 373–393 (LTAF…KGLL), 416–436 (IIAI…LYIY), and 439–459 (YYVT…TMLL).

It belongs to the glycosyltransferase 2 family.

It localises to the cell membrane. Its function is as follows. Probably part of a 4-gene DNA damage response locus in which the upstream ups system, in combination with this downstream locus, functions in homologous recombination to rescue Sulfolobales from DNA-damaging threats. The chain is Probable glycosyltransferase Saci_1499 from Sulfolobus acidocaldarius (strain ATCC 33909 / DSM 639 / JCM 8929 / NBRC 15157 / NCIMB 11770).